The chain runs to 326 residues: MAFTPFPPRQPTASARLPLTLMTLDDWALATITGADSEKYLQGQVTADVSQMTDDQHLLAAHCDAKGKMWSNLRLFRDGDGFAWIERRSVREPQLAELKKYAVFSKVTIAPDDERVLLGVAGFQARAALANIFSELPSKEKQVVKEGATTLLWFEHPAERFLIVTDEATANMLTDKLRGEAELNNSQQWLALNIEAGFPVIDAANSGQFIPQATNLQALGGISFKKGCYTGQEMVARAKFRGANKRALWLLTGSASRLPEAGEDLELKMGENWRRTGTVLAAVKLEDGQVVVQVVMNNDMEPDSIFRVRDDANTLCIEPLPYSLEE.

Folate is bound by residues tryptophan 27 and tryptophan 189.

This sequence belongs to the tRNA-modifying YgfZ family.

The protein resides in the cytoplasm. Folate-binding protein involved in regulating the level of ATP-DnaA and in the modification of some tRNAs. It is probably a key factor in regulatory networks that act via tRNA modification, such as initiation of chromosomal replication. This Escherichia coli O157:H7 (strain EC4115 / EHEC) protein is tRNA-modifying protein YgfZ.